Consider the following 131-residue polypeptide: Large-conductance mechanosensitive channel (131 aa).

A run of 3 helical transmembrane segments spans residues 8–28 (FAVR…GAFG), 30–50 (IVSS…LGGI), and 67–87 (GAFL…FLFV).

The protein belongs to the MscL family. As to quaternary structure, homopentamer.

It is found in the cell membrane. Its function is as follows. Channel that opens in response to stretch forces in the membrane lipid bilayer. May participate in the regulation of osmotic pressure changes within the cell. The sequence is that of Large-conductance mechanosensitive channel from Anoxybacillus flavithermus (strain DSM 21510 / WK1).